We begin with the raw amino-acid sequence, 347 residues long: MLKKFRGMFSNDLSIDLGTANTLIYVKGQGIVLNEPSVVAIRQDRAGSPKSVAAVGHDAKQMLGRTPGNIAAIRPMKDGVIADFFVTEKMLQHFIKQVHSNSFMRPSPRVLVCVPVGATQVERRAIRESAQGAGAREVFLIEEPMAAAIGAGLPVSEATGSMVVDIGGGTTEVAVISLNGVVYSSSVRIGGDRFDEAIINYVRRNYGSLIGEATAERIKHEIGSAYPGDEVREIEVRGRNLAEGVPRGFTLNSNEILEALQEPLTGIVSAVMVALEQCPPELASDISERGMVLTGGGALLRNLDRLLMEETGIPVVVAEDPLTCVARGGGKALEMIDMHGGDLFSEE.

ATP-binding positions include 19–21, 168–170, 216–219, and 296–299; these read TAN, GGT, ERIK, and GGAL.

The protein belongs to the FtsA/MreB family. As to quaternary structure, forms polymers.

Its subcellular location is the cytoplasm. Forms membrane-associated dynamic filaments that are essential for cell shape determination. Acts by regulating cell wall synthesis and cell elongation, and thus cell shape. A feedback loop between cell geometry and MreB localization may maintain elongated cell shape by targeting cell wall growth to regions of negative cell wall curvature. This chain is Cell shape-determining protein MreB, found in Escherichia coli O6:H1 (strain CFT073 / ATCC 700928 / UPEC).